We begin with the raw amino-acid sequence, 233 residues long: Phosphonates import ATP-binding protein PhnC 1 (233 aa).

In terms of domain architecture, ABC transporter spans 2–227 (LSVSGLTKRY…PAAALDREDI (226 aa)). 34 to 41 (GRSGAGKT) contributes to the ATP binding site.

This sequence belongs to the ABC transporter superfamily. Phosphonates importer (TC 3.A.1.9.1) family. In terms of assembly, the complex is composed of two ATP-binding proteins (PhnC), two transmembrane proteins (PhnE) and a solute-binding protein (PhnD).

Its subcellular location is the cell membrane. The enzyme catalyses phosphonate(out) + ATP + H2O = phosphonate(in) + ADP + phosphate + H(+). Part of the ABC transporter complex PhnCDE involved in phosphonates import. Responsible for energy coupling to the transport system. The sequence is that of Phosphonates import ATP-binding protein PhnC 1 from Natronomonas pharaonis (strain ATCC 35678 / DSM 2160 / CIP 103997 / JCM 8858 / NBRC 14720 / NCIMB 2260 / Gabara) (Halobacterium pharaonis).